The chain runs to 275 residues: Phenylalanine-4-hydroxylase (275 aa).

H135, H140, and E181 together coordinate Fe cation.

This sequence belongs to the biopterin-dependent aromatic amino acid hydroxylase family. Fe(2+) serves as cofactor.

The enzyme catalyses (6R)-L-erythro-5,6,7,8-tetrahydrobiopterin + L-phenylalanine + O2 = (4aS,6R)-4a-hydroxy-L-erythro-5,6,7,8-tetrahydrobiopterin + L-tyrosine. It participates in amino-acid degradation; L-phenylalanine degradation; acetoacetate and fumarate from L-phenylalanine: step 1/6. The chain is Phenylalanine-4-hydroxylase (phhA) from Mesorhizobium japonicum (strain LMG 29417 / CECT 9101 / MAFF 303099) (Mesorhizobium loti (strain MAFF 303099)).